A 416-amino-acid chain; its full sequence is S-adenosylmethionine synthase (416 aa).

An ATP-binding site is contributed by histidine 16. Aspartate 18 contacts Mg(2+). Glutamate 44 contributes to the K(+) binding site. Positions 57 and 100 each coordinate L-methionine. The segment at 100-110 (QSPDIAQGVTQ) is flexible loop. Residues 175–177 (DGK), 251–252 (KF), aspartate 260, 266–267 (RK), alanine 283, and lysine 287 each bind ATP. An L-methionine-binding site is contributed by aspartate 260. Lysine 291 lines the L-methionine pocket.

This sequence belongs to the AdoMet synthase family. As to quaternary structure, homotetramer; dimer of dimers. Mg(2+) is required as a cofactor. It depends on K(+) as a cofactor.

It localises to the cytoplasm. It carries out the reaction L-methionine + ATP + H2O = S-adenosyl-L-methionine + phosphate + diphosphate. It functions in the pathway amino-acid biosynthesis; S-adenosyl-L-methionine biosynthesis; S-adenosyl-L-methionine from L-methionine: step 1/1. In terms of biological role, catalyzes the formation of S-adenosylmethionine (AdoMet) from methionine and ATP. The overall synthetic reaction is composed of two sequential steps, AdoMet formation and the subsequent tripolyphosphate hydrolysis which occurs prior to release of AdoMet from the enzyme. This Crocosphaera subtropica (strain ATCC 51142 / BH68) (Cyanothece sp. (strain ATCC 51142)) protein is S-adenosylmethionine synthase.